A 49-amino-acid chain; its full sequence is Large ribosomal subunit protein bL33A (49 aa).

This sequence belongs to the bacterial ribosomal protein bL33 family.

In Bacillus cytotoxicus (strain DSM 22905 / CIP 110041 / 391-98 / NVH 391-98), this protein is Large ribosomal subunit protein bL33A.